The following is a 183-amino-acid chain: Putative manganese efflux pump MntP 1 (183 aa).

6 helical membrane passes run 6-26 (LFLLALAISLDAFGVILCIGI), 36-56 (MIFVFSFGFFQFFLSFLGGYI), 64-84 (IVPIPTIVGGLIIIIVGILMI), 100-120 (IMYLILGVSVSIDALVIGFTT), 130-150 (LFMSSLFMGLIATIICSLGII), and 158-178 (ISIISSYADYIGGIILILFGL).

Belongs to the MntP (TC 9.B.29) family.

The protein resides in the cell membrane. Probably functions as a manganese efflux pump. The sequence is that of Putative manganese efflux pump MntP 1 from Clostridium botulinum (strain Hall / ATCC 3502 / NCTC 13319 / Type A).